The primary structure comprises 441 residues: Glutamate--tRNA ligase 1 (441 aa).

The 'HIGH' region signature appears at 8 to 18 (PSPTGYIHIGN). Residues 239–243 (ALSKR) carry the 'KMSKS' region motif. Lysine 242 is an ATP binding site.

The protein belongs to the class-I aminoacyl-tRNA synthetase family. Glutamate--tRNA ligase type 1 subfamily. As to quaternary structure, monomer.

It localises to the cytoplasm. The enzyme catalyses tRNA(Glu) + L-glutamate + ATP = L-glutamyl-tRNA(Glu) + AMP + diphosphate. In terms of biological role, catalyzes the attachment of glutamate to tRNA(Glu) in a two-step reaction: glutamate is first activated by ATP to form Glu-AMP and then transferred to the acceptor end of tRNA(Glu). The chain is Glutamate--tRNA ligase 1 from Roseobacter denitrificans (strain ATCC 33942 / OCh 114) (Erythrobacter sp. (strain OCh 114)).